The primary structure comprises 167 residues: Leptin (167 aa).

An N-terminal signal peptide occupies residues 1-21 (MRCGPLYRFLWLWPYLSYVEA). An intrachain disulfide couples cysteine 117 to cysteine 167.

This sequence belongs to the leptin family.

Its subcellular location is the secreted. Its function is as follows. Key player in the regulation of energy balance and body weight control. Once released into the circulation, has central and peripheral effects by binding LEPR, found in many tissues, which results in the activation of several major signaling pathways. In the hypothalamus, acts as an appetite-regulating factor that induces a decrease in food intake and an increase in energy consumption by inducing anorexinogenic factors and suppressing orexigenic neuropeptides, also regulates bone mass and secretion of hypothalamo-pituitary-adrenal hormones. In the periphery, increases basal metabolism, influences reproductive function, regulates pancreatic beta-cell function and insulin secretion, is pro-angiogenic for endothelial cell and affects innate and adaptive immunity. In the arcuate nucleus of the hypothalamus, activates by depolarization POMC neurons inducing FOS and SOCS3 expression to release anorexigenic peptides and inhibits by hyperpolarization NPY neurons inducing SOCS3 with a consequent reduction on release of orexigenic peptides. In addition to its known satiety inducing effect, has a modulatory role in nutrient absorption. In the intestine, reduces glucose absorption by enterocytes by activating PKC and leading to a sequential activation of p38, PI3K and ERK signaling pathways which exerts an inhibitory effect on glucose absorption. Acts as a growth factor on certain tissues, through the activation of different signaling pathways increases expression of genes involved in cell cycle regulation such as CCND1, via JAK2-STAT3 pathway, or VEGFA, via MAPK1/3 and PI3K-AKT1 pathways. May also play an apoptotic role via JAK2-STAT3 pathway and up-regulation of BIRC5 expression. Pro-angiogenic, has mitogenic activity on vascular endothelial cells and plays a role in matrix remodeling by regulating the expression of matrix metalloproteinases (MMPs) and tissue inhibitors of metalloproteinases (TIMPs). In innate immunity, modulates the activity and function of neutrophils by increasing chemotaxis and the secretion of oxygen radicals. Increases phagocytosis by macrophages and enhances secretion of pro-inflammatory mediators. Increases cytotoxic ability of NK cells. Plays a pro-inflammatory role, in synergy with IL1B, by inducing NOS2 which promotes the production of IL6, IL8 and Prostaglandin E2, through a signaling pathway that involves JAK2, PI3K, MAP2K1/MEK1 and MAPK14/p38. In adaptive immunity, promotes the switch of memory T-cells towards T helper-1 cell immune responses. Increases CD4(+)CD25(-) T-cell proliferation and reduces autophagy during TCR (T-cell receptor) stimulation, through MTOR signaling pathway activation and BCL2 up-regulation. The polypeptide is Leptin (LEP) (Capra hircus (Goat)).